The chain runs to 969 residues: UvrABC system protein A (969 aa).

32–39 (GLSGSGKS) provides a ligand contact to ATP. A C4-type zinc finger spans residues 258–286 (CPNGHPLAVDDLEPRSFSFNSPYGACPEC). 2 ABC transporter domains span residues 316–599 (WSAG…KDSI) and 619–948 (VDRK…KFLA). ATP is bound at residue 652–659 (GVSGSGKS). The C4-type zinc-finger motif lies at 751 to 777 (CEACTGDGTIKIEMNFLPDVYVPCEVC).

The protein belongs to the ABC transporter superfamily. UvrA family. Forms a heterotetramer with UvrB during the search for lesions.

It localises to the cytoplasm. The UvrABC repair system catalyzes the recognition and processing of DNA lesions. UvrA is an ATPase and a DNA-binding protein. A damage recognition complex composed of 2 UvrA and 2 UvrB subunits scans DNA for abnormalities. When the presence of a lesion has been verified by UvrB, the UvrA molecules dissociate. The chain is UvrABC system protein A from Mycobacterium leprae (strain TN).